A 378-amino-acid polypeptide reads, in one-letter code: Cysteine endopeptidase RepA (378 aa).

The first 24 residues, 1–24 (MLRCFLVAAAAVALAAAAAAPARA), serve as a signal peptide directing secretion. The propeptide at 25–141 (IPFTESDLSS…SFRYGGDDED (117 aa)) is activation peptide. Intrachain disulfides connect Cys-164–Cys-206, Cys-198–Cys-239, and Cys-297–Cys-350. Cys-167 is a catalytic residue. Catalysis depends on residues His-303 and Asn-324.

It belongs to the peptidase C1 family.

The protein localises to the protein storage vacuole. Its function is as follows. Cysteine endopeptidase that digests in vitro both the acidic and basic subunits of glutelin, the major seed storage protein of rice. The polypeptide is Cysteine endopeptidase RepA (Oryza sativa subsp. japonica (Rice)).